A 371-amino-acid chain; its full sequence is Macrolide export protein MacA (371 aa).

The Cytoplasmic segment spans residues 1–10 (MKKRKTVKKR). A helical transmembrane segment spans residues 11-31 (YVIALVIVIAGLITLWRILNA). The Periplasmic segment spans residues 32-371 (PVPTYQTLIV…IGEAKPGAAQ (340 aa)). Residues 92 to 137 (IDPEQAENQIKEVEATLMELRAQRQQAEAELKLARVTYSRQQRLAQ) adopt a coiled-coil conformation.

It belongs to the membrane fusion protein (MFP) (TC 8.A.1) family. As to quaternary structure, homohexamer. Part of the tripartite efflux system MacAB-TolC, which is composed of an inner membrane transporter, MacB, a periplasmic membrane fusion protein, MacA, and an outer membrane component, TolC. The complex forms a large protein conduit and can translocate molecules across both the inner and outer membranes. MacA interacts with MacB and TolC.

It localises to the cell inner membrane. Functionally, part of the tripartite efflux system MacAB-TolC. MacA stimulates the ATPase activity of MacB by promoting the closed ATP-bound state of MacB, increases the capacity of MacB to bind macrolides such as erythromycin, and provides a physical link between MacB and TolC. Confers resistance against macrolides. In Escherichia coli O157:H7, this protein is Macrolide export protein MacA (macA).